The following is a 663-amino-acid chain: Epithelial sodium channel subunit gamma-2 (663 aa).

Residues 1–55 (MSNSGKKLTQKLKKNLPVTGPQAPTLYELMQWYCLNTNTHGCRRIVVSKGRLRRW) lie on the Cytoplasmic side of the membrane. The helical transmembrane segment at 56–76 (IWIVLTLIAVALIFWQCALLL) threads the bilayer. Over 77–544 (MTYYSVSASI…GGQLGLWMSC (468 aa)) the chain is Extracellular. 8 disulfide bridges follow: cysteine 101–cysteine 286, cysteine 209–cysteine 217, cysteine 263–cysteine 270, cysteine 375–cysteine 460, cysteine 397–cysteine 456, cysteine 401–cysteine 452, cysteine 410–cysteine 437, and cysteine 412–cysteine 426. The helical transmembrane segment at 545-565 (SMVCGLEIVEVFFIDSFWVIL) threads the bilayer. The Cytoplasmic segment spans residues 566–663 (RQKWHKLCNW…IDSDEDVERF (98 aa)).

This sequence belongs to the amiloride-sensitive sodium channel (TC 1.A.6) family. SCNN1G subfamily. Component of the heterotrimeric epithelial sodium channel (ENaC) composed of an alpha/SCNN1A, a beta/SCNN1B and a gamma/SCNN1G subunit.

The protein resides in the apical cell membrane. The catalysed reaction is Na(+)(in) = Na(+)(out). With respect to regulation, originally identified and characterized by its inhibition by the diuretic drug amiloride. This is one of the three pore-forming subunits of the heterotrimeric epithelial sodium channel (ENaC), a critical regulator of sodium balance and fluid homeostasis. ENaC operates in epithelial tissues, where it mediates the electrodiffusion of sodium ions from extracellular fluid through the apical membrane of cells, with water following osmotically. The protein is Epithelial sodium channel subunit gamma-2 (scnn1g-b) of Xenopus laevis (African clawed frog).